A 105-amino-acid chain; its full sequence is UPF0122 protein OB1530 (105 aa).

It belongs to the UPF0122 family.

Functionally, might take part in the signal recognition particle (SRP) pathway. This is inferred from the conservation of its genetic proximity to ftsY/ffh. May be a regulatory protein. This chain is UPF0122 protein OB1530, found in Oceanobacillus iheyensis (strain DSM 14371 / CIP 107618 / JCM 11309 / KCTC 3954 / HTE831).